A 349-amino-acid chain; its full sequence is Phenylalanine--tRNA ligase alpha subunit (349 aa).

Position 258 (glutamate 258) interacts with Mg(2+).

This sequence belongs to the class-II aminoacyl-tRNA synthetase family. Phe-tRNA synthetase alpha subunit type 1 subfamily. In terms of assembly, tetramer of two alpha and two beta subunits. It depends on Mg(2+) as a cofactor.

The protein resides in the cytoplasm. It carries out the reaction tRNA(Phe) + L-phenylalanine + ATP = L-phenylalanyl-tRNA(Phe) + AMP + diphosphate + H(+). This Rickettsia felis (strain ATCC VR-1525 / URRWXCal2) (Rickettsia azadi) protein is Phenylalanine--tRNA ligase alpha subunit.